Consider the following 333-residue polypeptide: Cytosolic Fe-S cluster assembly factor NBP35 (333 aa).

Positions 32, 46, 49, and 55 each coordinate [4Fe-4S] cluster. Glycine 85–serine 92 is a binding site for ATP. [4Fe-4S] cluster contacts are provided by cysteine 258 and cysteine 261.

This sequence belongs to the Mrp/NBP35 ATP-binding proteins family. NUBP1/NBP35 subfamily. In terms of assembly, heterotetramer of 2 NBP35 and 2 CFD1 chains. [4Fe-4S] cluster is required as a cofactor.

The protein localises to the cytoplasm. It localises to the nucleus. Component of the cytosolic iron-sulfur (Fe/S) protein assembly (CIA) machinery. Required for maturation of extramitochondrial Fe-S proteins. The NBP35-CFD1 heterotetramer forms a Fe-S scaffold complex, mediating the de novo assembly of an Fe-S cluster and its transfer to target apoproteins. Required for biogenesis and export of both ribosomal subunits, which may reflect a role in assembly of the Fe/S clusters in RLI1, a protein which performs rRNA processing and ribosome export. The polypeptide is Cytosolic Fe-S cluster assembly factor NBP35 (Eremothecium gossypii (strain ATCC 10895 / CBS 109.51 / FGSC 9923 / NRRL Y-1056) (Yeast)).